Reading from the N-terminus, the 639-residue chain is tRNA (uracil(54)-C(5))-methyltransferase (639 aa).

The tract at residues 78-113 (VPPTMKHTVDNKRLSSPLTDSGNRRTKKPKLRKYKA) is disordered. 2 positions are modified to phosphoserine: serine 92 and serine 93. The segment covering 101-113 (RRTKKPKLRKYKA) has biased composition (basic residues). Residues 163-228 (LQYHREVKNV…PYYVESDLLD (66 aa)) enclose the TRAM domain. S-adenosyl-L-methionine-binding residues include glutamine 461, tyrosine 496, glutamate 517, and aspartate 564. The active-site Nucleophile is the cysteine 591. Glutamate 631 acts as the Proton acceptor in catalysis.

It belongs to the class I-like SAM-binding methyltransferase superfamily. RNA M5U methyltransferase family.

The enzyme catalyses uridine(54) in tRNA + S-adenosyl-L-methionine = 5-methyluridine(54) in tRNA + S-adenosyl-L-homocysteine + H(+). Functionally, catalyzes the formation of 5-methyl-uridine at position 54 (m5U54) in all tRNA. May also have a role in tRNA stabilization or maturation. The polypeptide is tRNA (uracil(54)-C(5))-methyltransferase (TRM2) (Saccharomyces cerevisiae (strain ATCC 204508 / S288c) (Baker's yeast)).